The sequence spans 310 residues: Oxygen-dependent coproporphyrinogen-III oxidase (310 aa).

Residue serine 97 coordinates substrate. The a divalent metal cation site is built by histidine 101 and histidine 111. The active-site Proton donor is the histidine 111. Asparagine 113–arginine 115 contributes to the substrate binding site. A divalent metal cation contacts are provided by histidine 150 and histidine 180. The interval tyrosine 245 to arginine 280 is important for dimerization. Glycine 263 to arginine 265 serves as a coordination point for substrate.

It belongs to the aerobic coproporphyrinogen-III oxidase family. Homodimer. It depends on a divalent metal cation as a cofactor.

It is found in the cytoplasm. The catalysed reaction is coproporphyrinogen III + O2 + 2 H(+) = protoporphyrinogen IX + 2 CO2 + 2 H2O. Its pathway is porphyrin-containing compound metabolism; protoporphyrin-IX biosynthesis; protoporphyrinogen-IX from coproporphyrinogen-III (O2 route): step 1/1. Involved in the heme biosynthesis. Catalyzes the aerobic oxidative decarboxylation of propionate groups of rings A and B of coproporphyrinogen-III to yield the vinyl groups in protoporphyrinogen-IX. The sequence is that of Oxygen-dependent coproporphyrinogen-III oxidase from Coxiella burnetii (strain Dugway 5J108-111).